A 274-amino-acid polypeptide reads, in one-letter code: NAD-dependent protein deacylase (274 aa).

The region spanning 4 to 274 is the Deacetylase sirtuin-type domain; sequence CLLPSSDMDA…GELLPKALAP (271 aa). Position 29–48 (29–48) interacts with NAD(+); it reads GAGVSAESGVPTFRGAGGLW. Tyr73 and Arg76 together coordinate substrate. 111–114 provides a ligand contact to NAD(+); the sequence is QNID. His129 serves as the catalytic Proton acceptor. Cys137, Cys140, Cys178, and Cys183 together coordinate Zn(2+). NAD(+) contacts are provided by residues 220–222, 246–248, and Cys264; these read GTS and NME.

This sequence belongs to the sirtuin family. Class III subfamily. The cofactor is Zn(2+).

The protein localises to the mitochondrion. It catalyses the reaction N(6)-malonyl-L-lysyl-[protein] + NAD(+) + H2O = 2''-O-malonyl-ADP-D-ribose + nicotinamide + L-lysyl-[protein]. The catalysed reaction is N(6)-succinyl-L-lysyl-[protein] + NAD(+) + H2O = 2''-O-succinyl-ADP-D-ribose + nicotinamide + L-lysyl-[protein]. It carries out the reaction N(6)-glutaryl-L-lysyl-[protein] + NAD(+) + H2O = 2''-O-glutaryl-ADP-D-ribose + nicotinamide + L-lysyl-[protein]. Functionally, NAD-dependent lysine demalonylase, desuccinylase and deglutarylase that specifically removes malonyl, succinyl and glutaryl groups on target proteins. Has weak NAD-dependent protein deacetylase activity; however this activity may not be physiologically relevant in vivo. The sequence is that of NAD-dependent protein deacylase from Daphnia pulex (Water flea).